The following is a 174-amino-acid chain: Dual-action ribosomal maturation protein DarP (174 aa).

This sequence belongs to the DarP family.

It localises to the cytoplasm. Functionally, member of a network of 50S ribosomal subunit biogenesis factors which assembles along the 30S-50S interface, preventing incorrect 23S rRNA structures from forming. Promotes peptidyl transferase center (PTC) maturation. This chain is Dual-action ribosomal maturation protein DarP, found in Vibrio atlanticus (strain LGP32) (Vibrio splendidus (strain Mel32)).